The sequence spans 259 residues: Leucyl/phenylalanyl-tRNA--protein transferase (259 aa).

Belongs to the L/F-transferase family.

It is found in the cytoplasm. The enzyme catalyses N-terminal L-lysyl-[protein] + L-leucyl-tRNA(Leu) = N-terminal L-leucyl-L-lysyl-[protein] + tRNA(Leu) + H(+). It catalyses the reaction N-terminal L-arginyl-[protein] + L-leucyl-tRNA(Leu) = N-terminal L-leucyl-L-arginyl-[protein] + tRNA(Leu) + H(+). It carries out the reaction L-phenylalanyl-tRNA(Phe) + an N-terminal L-alpha-aminoacyl-[protein] = an N-terminal L-phenylalanyl-L-alpha-aminoacyl-[protein] + tRNA(Phe). Functionally, functions in the N-end rule pathway of protein degradation where it conjugates Leu, Phe and, less efficiently, Met from aminoacyl-tRNAs to the N-termini of proteins containing an N-terminal arginine or lysine. The protein is Leucyl/phenylalanyl-tRNA--protein transferase of Teredinibacter turnerae (strain ATCC 39867 / T7901).